The sequence spans 239 residues: NPHYVDKDRDLDIACRRIAWGKFMNSGQTCVAPDYILCDPSIQSQVVEKLKKSLKEFYGEDAKKSRDYGRIINSRHFQRVMGLLEGQKVAYGGTGDATTRYIAPTILTDVDPESPVMQEEVFGPVLPIMCVRSLEEAIQFITQREKPLALYVFSPNDKVIKKMIAETSSGGVTANDVVVHISVHSLPYGGVGDSGMGSYHGRKSFETFSHRRSCLVRPLLNEETLKARYPRARPICPDT.

Cysteine 30 is a catalytic residue.

The protein belongs to the aldehyde dehydrogenase family. As to quaternary structure, homodimer.

It localises to the cytoplasm. The enzyme catalyses an aldehyde + NAD(+) + H2O = a carboxylate + NADH + 2 H(+). It carries out the reaction octanal + NAD(+) + H2O = octanoate + NADH + 2 H(+). In terms of biological role, ALDHs play a major role in the detoxification of alcohol-derived acetaldehyde. They are involved in the metabolism of corticosteroids, biogenic amines, neurotransmitters, and lipid peroxidation. Oxidizes medium and long chain aldehydes into non-toxic fatty acids. Preferentially oxidizes aromatic aldehyde substrates. Comprises about 50 percent of corneal epithelial soluble proteins. May play a role in preventing corneal damage caused by ultraviolet light. In Bos taurus (Bovine), this protein is Aldehyde dehydrogenase, dimeric NADP-preferring (ALDH3A1).